We begin with the raw amino-acid sequence, 341 residues long: Adenosine deaminase (341 aa).

Zn(2+) contacts are provided by H15 and H17. Substrate is bound by residues H17, D19, and G172. H199 is a binding site for Zn(2+). E202 serves as the catalytic Proton donor. A Zn(2+)-binding site is contributed by D279.

The protein belongs to the metallo-dependent hydrolases superfamily. Adenosine and AMP deaminases family. Adenosine deaminase subfamily. It depends on Zn(2+) as a cofactor.

The enzyme catalyses adenosine + H2O + H(+) = inosine + NH4(+). It catalyses the reaction 2'-deoxyadenosine + H2O + H(+) = 2'-deoxyinosine + NH4(+). Catalyzes the hydrolytic deamination of adenosine and 2-deoxyadenosine. The sequence is that of Adenosine deaminase from Streptococcus equi subsp. zooepidemicus (strain MGCS10565).